A 236-amino-acid chain; its full sequence is Phosphoribosylaminoimidazole-succinocarboxamide synthase (236 aa).

It belongs to the SAICAR synthetase family.

The enzyme catalyses 5-amino-1-(5-phospho-D-ribosyl)imidazole-4-carboxylate + L-aspartate + ATP = (2S)-2-[5-amino-1-(5-phospho-beta-D-ribosyl)imidazole-4-carboxamido]succinate + ADP + phosphate + 2 H(+). The protein operates within purine metabolism; IMP biosynthesis via de novo pathway; 5-amino-1-(5-phospho-D-ribosyl)imidazole-4-carboxamide from 5-amino-1-(5-phospho-D-ribosyl)imidazole-4-carboxylate: step 1/2. This chain is Phosphoribosylaminoimidazole-succinocarboxamide synthase, found in Pseudomonas putida (strain GB-1).